The sequence spans 193 residues: Acyl carrier protein phosphodiesterase (193 aa).

It belongs to the AcpH family.

It carries out the reaction holo-[ACP] + H2O = apo-[ACP] + (R)-4'-phosphopantetheine + H(+). Converts holo-ACP to apo-ACP by hydrolytic cleavage of the phosphopantetheine prosthetic group from ACP. The chain is Acyl carrier protein phosphodiesterase from Salmonella paratyphi A (strain ATCC 9150 / SARB42).